We begin with the raw amino-acid sequence, 297 residues long: 4-hydroxy-tetrahydrodipicolinate synthase (297 aa).

T47 contributes to the pyruvate binding site. The active-site Proton donor/acceptor is Y135. Catalysis depends on K163, which acts as the Schiff-base intermediate with substrate. I205 contributes to the pyruvate binding site.

It belongs to the DapA family. In terms of assembly, homotetramer; dimer of dimers.

It is found in the cytoplasm. It catalyses the reaction L-aspartate 4-semialdehyde + pyruvate = (2S,4S)-4-hydroxy-2,3,4,5-tetrahydrodipicolinate + H2O + H(+). It participates in amino-acid biosynthesis; L-lysine biosynthesis via DAP pathway; (S)-tetrahydrodipicolinate from L-aspartate: step 3/4. Functionally, catalyzes the condensation of (S)-aspartate-beta-semialdehyde [(S)-ASA] and pyruvate to 4-hydroxy-tetrahydrodipicolinate (HTPA). This is 4-hydroxy-tetrahydrodipicolinate synthase from Dehalococcoides mccartyi (strain ATCC BAA-2100 / JCM 16839 / KCTC 5957 / BAV1).